A 262-amino-acid chain; its full sequence is Acyl-coenzyme A diphosphatase FITM2 (262 aa).

Residues 1-23 (MEHLERCAWVLRGTLVRAAVRRY) lie on the Cytoplasmic side of the membrane. The chain crosses the membrane as a helical span at residues 24–44 (LPWALAASMLAGSLLKELSPL). Residues 45-57 (PESYLSNKRNVLN) are Lumenal-facing. Residues 58–78 (VYFVKVAWAWTFCLLLPFIAL) traverse the membrane as a helical segment. The Cytoplasmic portion of the chain corresponds to 79–93 (TNYHLTGKAGLVLRR). The chain crosses the membrane as a helical span at residues 94-114 (LSTLLVGTAIWYVCTAIFSNV). The Lumenal portion of the chain corresponds to 115-145 (EHYTGSCYQSPALEGVRNEPLSKQQCHGQGG). A helical transmembrane segment spans residues 146 to 166 (FWHGFDISGHSFLLTFCALMI). H155 is a catalytic residue. Over 167–185 (VEEMAVLHEVKTDRSHCLH) the chain is Cytoplasmic. A helical membrane pass occupies residues 186–206 (VAITALVVALGFLTFIWVWMF). Residues 207 to 218 (LCTAVYFHNLSQ) are Lumenal-facing. H214 is an active-site residue. A helical membrane pass occupies residues 219–239 (KVFGTLFGLLGWYGTYGFWYL). Topologically, residues 240–262 (KSFSPGLPPQSCSSNLKQDSYKR) are cytoplasmic.

This sequence belongs to the FIT family. FIT2 subfamily.

It localises to the endoplasmic reticulum membrane. It carries out the reaction an acyl-CoA + H2O = an acyl-4'-phosphopantetheine + adenosine 3',5'-bisphosphate + 2 H(+). The enzyme catalyses (9Z)-octadecenoyl-CoA + H2O = S-(9Z-octadecenoyl)-4'-phosphopantetheine + adenosine 3',5'-bisphosphate + 2 H(+). It catalyses the reaction (5Z,8Z,11Z,14Z)-eicosatetraenoyl-CoA + H2O = S-(5Z,8Z,11Z,14Z-eicosatetraenoyl)-4'-phosphopantetheine + adenosine 3',5'-bisphosphate + 2 H(+). The catalysed reaction is hexadecanoyl-CoA + H2O = S-hexadecanoyl-4'-phosphopantetheine + adenosine 3',5'-bisphosphate + 2 H(+). In terms of biological role, fatty acyl-coenzyme A (CoA) diphosphatase that hydrolyzes fatty acyl-CoA to yield acyl-4'-phosphopantetheine and adenosine 3',5'-bisphosphate. Preferentially hydrolyzes unsaturated long-chain acyl-CoA substrates such as oleoyl-CoA/(9Z)-octadecenoyl-CoA and arachidonoyl-CoA/(5Z,8Z,11Z,14Z)-eicosatetraenoyl-CoA in the endoplasmic reticulum (ER) lumen. This catalytic activity is required for maintaining ER structure and for lipid droplets (LDs) biogenesis, which are lipid storage organelles involved in maintaining lipid and energy homeostasis. Directly binds to diacylglycerol (DAGs) and triacylglycerol, which is also important for LD biogenesis. May support directional budding of nacent LDs from the ER into the cytosol by reducing DAG levels at sites of LD formation. Plays a role in the regulation of cell morphology and cytoskeletal organization. This chain is Acyl-coenzyme A diphosphatase FITM2, found in Sus scrofa (Pig).